The following is a 309-amino-acid chain: Acetylglutamate kinase (309 aa).

Substrate is bound by residues 69 to 70 (GG), Arg-91, and Asn-194.

Belongs to the acetylglutamate kinase family. ArgB subfamily.

It is found in the cytoplasm. It carries out the reaction N-acetyl-L-glutamate + ATP = N-acetyl-L-glutamyl 5-phosphate + ADP. The protein operates within amino-acid biosynthesis; L-arginine biosynthesis; N(2)-acetyl-L-ornithine from L-glutamate: step 2/4. Its function is as follows. Catalyzes the ATP-dependent phosphorylation of N-acetyl-L-glutamate. This is Acetylglutamate kinase from Vesicomyosocius okutanii subsp. Calyptogena okutanii (strain HA).